The sequence spans 29 residues: U-limacoditoxin(12)-Dv72 (29 aa).

A signal peptide spans 1-15 (MNFGMLKLLTVLIIC). The residue at position 27 (asparagine 27) is an Asparagine amide.

Belongs to the limacoditoxin-12 family. As to expression, expressed by the venom secretory cell of the spine. The spine is a cuticular structure containing a single large nucleated venom-secreting cell at its base. It is an independent unit capable of producing, storing and injecting venom. On the back of D.vulnerans caterpillars, spines are grouped together by 50 to 100 to form scoli, of which there are eight in D.vulnerans.

The protein resides in the secreted. Its function is as follows. Probable toxin. Does not show insecticidal, antimicrobial and antiparasitic activities. Does not induce increase in intracellular calcium in mouse DRG neurons, suggesting that it does not induce pain. The polypeptide is U-limacoditoxin(12)-Dv72 (Doratifera vulnerans (Mottled cup moth)).